A 409-amino-acid polypeptide reads, in one-letter code: Argininosuccinate synthase (409 aa).

Residues 8 to 16 and A34 each bind ATP; that span reads AYSGGLDTS. Residue Y85 coordinates L-citrulline. An ATP-binding site is contributed by G115. T117, N121, and D122 together coordinate L-aspartate. N121 contributes to the L-citrulline binding site. 5 residues coordinate L-citrulline: R125, S178, S187, E268, and Y280.

This sequence belongs to the argininosuccinate synthase family. Type 1 subfamily. In terms of assembly, homotetramer.

It is found in the cytoplasm. The catalysed reaction is L-citrulline + L-aspartate + ATP = 2-(N(omega)-L-arginino)succinate + AMP + diphosphate + H(+). It functions in the pathway amino-acid biosynthesis; L-arginine biosynthesis; L-arginine from L-ornithine and carbamoyl phosphate: step 2/3. This chain is Argininosuccinate synthase, found in Thermotoga maritima (strain ATCC 43589 / DSM 3109 / JCM 10099 / NBRC 100826 / MSB8).